The primary structure comprises 627 residues: 1-deoxy-D-xylulose-5-phosphate synthase (627 aa).

Residues histidine 80 and 121–123 each bind thiamine diphosphate; that span reads GHS. Aspartate 152 is a Mg(2+) binding site. Thiamine diphosphate is bound by residues 153–154, asparagine 181, tyrosine 288, and glutamate 370; that span reads GA. Asparagine 181 provides a ligand contact to Mg(2+).

Belongs to the transketolase family. DXPS subfamily. In terms of assembly, homodimer. Mg(2+) is required as a cofactor. Thiamine diphosphate serves as cofactor.

It catalyses the reaction D-glyceraldehyde 3-phosphate + pyruvate + H(+) = 1-deoxy-D-xylulose 5-phosphate + CO2. The protein operates within metabolic intermediate biosynthesis; 1-deoxy-D-xylulose 5-phosphate biosynthesis; 1-deoxy-D-xylulose 5-phosphate from D-glyceraldehyde 3-phosphate and pyruvate: step 1/1. Catalyzes the acyloin condensation reaction between C atoms 2 and 3 of pyruvate and glyceraldehyde 3-phosphate to yield 1-deoxy-D-xylulose-5-phosphate (DXP). The chain is 1-deoxy-D-xylulose-5-phosphate synthase from Aliivibrio fischeri (strain ATCC 700601 / ES114) (Vibrio fischeri).